We begin with the raw amino-acid sequence, 135 residues long: UPF0299 membrane protein PC1_1498 (135 aa).

The next 4 helical transmembrane spans lie at 5 to 25, 30 to 50, 63 to 83, and 93 to 113; these read FIVC…LLAG, ALLP…FTLL, GCHL…VGVM, and FGPI…VVGF.

It belongs to the UPF0299 family.

It localises to the cell inner membrane. This Pectobacterium carotovorum subsp. carotovorum (strain PC1) protein is UPF0299 membrane protein PC1_1498.